We begin with the raw amino-acid sequence, 123 residues long: ATP synthase epsilon chain (123 aa).

The protein belongs to the ATPase epsilon chain family. F-type ATPases have 2 components, CF(1) - the catalytic core - and CF(0) - the membrane proton channel. CF(1) has five subunits: alpha(3), beta(3), gamma(1), delta(1), epsilon(1). CF(0) has three main subunits: a, b and c.

The protein localises to the cell membrane. Its function is as follows. Produces ATP from ADP in the presence of a proton gradient across the membrane. The polypeptide is ATP synthase epsilon chain (Corynebacterium diphtheriae (strain ATCC 700971 / NCTC 13129 / Biotype gravis)).